Here is a 334-residue protein sequence, read N- to C-terminus: Serine/threonine-protein kinase SAPK3 (334 aa).

The 257-residue stretch at 5–261 folds into the Protein kinase domain; sequence YEALKELGAG…IPEIKKHTWF (257 aa). ATP contacts are provided by residues 11–19 and Lys-34; that span reads LGAGNFGVA. Asp-124 (proton acceptor) is an active-site residue.

It belongs to the protein kinase superfamily. Ser/Thr protein kinase family. Post-translationally, autophosphorylated in presence of Ca(2+). In terms of tissue distribution, expressed in leaves and maturing seeds, but not in roots and stems of field-grown plants.

The protein localises to the cytoplasm. The protein resides in the nucleus. It carries out the reaction L-seryl-[protein] + ATP = O-phospho-L-seryl-[protein] + ADP + H(+). The catalysed reaction is L-threonyl-[protein] + ATP = O-phospho-L-threonyl-[protein] + ADP + H(+). With respect to regulation, activated by phosphorylation. Functionally, may play a role in signal transduction of hyperosmotic response. The sequence is that of Serine/threonine-protein kinase SAPK3 (SAPK3) from Oryza sativa subsp. indica (Rice).